The chain runs to 363 residues: MKKFTLLLLCFVLPMTSAYAARIKDVAQVAGVRSNQLVGYGLVSGLPGTGESTPFTEQSFAAMLQNFGIQLPAGTKPKIKNVAAVMVTAELPPFSKPGQQIDVTVSSIGSAKSLRGGTLLQTFLKGLDGQVYAVAQGNLVVSGFSAEGADGSKIVGNNPTVGIISSGAMVEREVPTPFGRGDFITFNLLESDFTTAQRMADAVNNFLGPQMASAVDATSVRVRAPRDISQRVAFLSAIENLEFDPADGAAKIIVNSRTGTIVVGKHVRLKPAAVTHGGMTVAIKENLSVSQPNGFSGGETVVVPNSDISVTEEQGKMFKFEPGLTLDDLVRAVNQVGAAPSDLMAILQALKQAGAIEGQLIII.

The first 20 residues, 1-20, serve as a signal peptide directing secretion; the sequence is MKKFTLLLLCFVLPMTSAYA.

This sequence belongs to the FlgI family. As to quaternary structure, the basal body constitutes a major portion of the flagellar organelle and consists of four rings (L,P,S, and M) mounted on a central rod.

Its subcellular location is the periplasm. It is found in the bacterial flagellum basal body. Functionally, assembles around the rod to form the L-ring and probably protects the motor/basal body from shearing forces during rotation. In Vibrio vulnificus (strain YJ016), this protein is Flagellar P-ring protein.